The primary structure comprises 40 residues: uncharacterized protein (40 aa).

Positions 1-17 (MAVAALAMYGGTCGACA) are cleaved as a signal peptide.

This is an uncharacterized protein from Archaeoglobus fulgidus (strain ATCC 49558 / DSM 4304 / JCM 9628 / NBRC 100126 / VC-16).